We begin with the raw amino-acid sequence, 757 residues long: RNA-directed RNA polymerase catalytic subunit (757 aa).

Residues 50 to 81 (SEKGKWTTNTETGAPQLNPIDGPLPEDNEPSG) are disordered. The span at 55–64 (WTTNTETGAP) shows a compositional bias: polar residues. 2 short sequence motifs (nuclear localization signal) span residues 187–195 (RKRRVRDNM) and 203–216 (RTIGKKKQRVNKRS). The interval 249-256 (RGFVYFVE) is promoter-binding site. The RdRp catalytic domain occupies 286–483 (VRKMMTNSQD…GINMSKKKSY (198 aa)).

The protein belongs to the influenza viruses polymerase PB1 family. As to quaternary structure, influenza RNA polymerase is composed of three subunits: PB1, PB2 and PA. Interacts (via N-terminus) with PA (via C-terminus). Interacts (via C-terminus) with PB2 (via N-terminus); this interaction is essential for transcription initiation. In terms of processing, phosphorylated by host PRKCA.

Its subcellular location is the host nucleus. The protein localises to the host cytoplasm. It carries out the reaction RNA(n) + a ribonucleoside 5'-triphosphate = RNA(n+1) + diphosphate. In terms of biological role, RNA-dependent RNA polymerase which is responsible for replication and transcription of virus RNA segments. The transcription of viral mRNAs occurs by a unique mechanism called cap-snatching. 5' methylated caps of cellular mRNAs are cleaved after 10-13 nucleotides by PA. In turn, these short capped RNAs are used as primers by PB1 for transcription of viral mRNAs. During virus replication, PB1 initiates RNA synthesis and copy vRNA into complementary RNA (cRNA) which in turn serves as a template for the production of more vRNAs. The sequence is that of RNA-directed RNA polymerase catalytic subunit from Influenza A virus (strain A/Swine/Colorado/1/1977 H3N2).